The primary structure comprises 554 residues: Phenylalanine--tRNA ligase beta subunit (554 aa).

Residues 276 to 351 (LTLKSRIISI…INYGYEKFEG (76 aa)) form the B5 domain. Residues D329, D335, E338, and E339 each contribute to the Mg(2+) site.

This sequence belongs to the phenylalanyl-tRNA synthetase beta subunit family. Type 2 subfamily. As to quaternary structure, tetramer of two alpha and two beta subunits. Requires Mg(2+) as cofactor.

It is found in the cytoplasm. It catalyses the reaction tRNA(Phe) + L-phenylalanine + ATP = L-phenylalanyl-tRNA(Phe) + AMP + diphosphate + H(+). This is Phenylalanine--tRNA ligase beta subunit from Methanococcus maripaludis (strain C7 / ATCC BAA-1331).